We begin with the raw amino-acid sequence, 255 residues long: Small ribosomal subunit protein eS1 (255 aa).

The segment covering 1–18 (MAVGKNKRLSKGKKGLKK) has biased composition (basic residues). Positions 1–28 (MAVGKNKRLSKGKKGLKKRTQDPFSRKD) are disordered. A2 bears the N-acetylalanine; partial mark. Positions 19-28 (RTQDPFSRKD) are enriched in basic and acidic residues.

Belongs to the eukaryotic ribosomal protein eS1 family. In terms of assembly, component of the small ribosomal subunit. Mature ribosomes consist of a small (40S) and a large (60S) subunit. The 40S subunit contains about 33 different proteins and 1 molecule of RNA (18S). The 60S subunit contains about 49 different proteins and 3 molecules of RNA (25S, 5.8S and 5S).

The protein localises to the cytoplasm. The protein is Small ribosomal subunit protein eS1 of Ajellomyces capsulatus (strain H143) (Darling's disease fungus).